A 380-amino-acid polypeptide reads, in one-letter code: Lipid-A-disaccharide synthase (380 aa).

This sequence belongs to the LpxB family.

The catalysed reaction is a lipid X + a UDP-2-N,3-O-bis[(3R)-3-hydroxyacyl]-alpha-D-glucosamine = a lipid A disaccharide + UDP + H(+). It functions in the pathway bacterial outer membrane biogenesis; LPS lipid A biosynthesis. Condensation of UDP-2,3-diacylglucosamine and 2,3-diacylglucosamine-1-phosphate to form lipid A disaccharide, a precursor of lipid A, a phosphorylated glycolipid that anchors the lipopolysaccharide to the outer membrane of the cell. The protein is Lipid-A-disaccharide synthase of Pseudomonas savastanoi pv. phaseolicola (strain 1448A / Race 6) (Pseudomonas syringae pv. phaseolicola (strain 1448A / Race 6)).